The chain runs to 397 residues: uncharacterized protein (397 aa).

The next 4 helical transmembrane spans lie at I22–G42, I270–V290, V327–L347, and V362–A382.

It belongs to the ABC-4 integral membrane protein family. Part of a complex composed of YknX, YknY and YknZ. The complex interacts with YknW.

The protein localises to the cell membrane. Its subcellular location is the membrane raft. Part of an unusual four-component transporter, which is required for protection against the killing factor SdpC (sporulation-delaying protein). This is an uncharacterized protein from Bacillus subtilis (strain 168).